A 277-amino-acid chain; its full sequence is Large ribosomal subunit protein uL2 (277 aa).

Residues Gly-222–Lys-277 form a disordered region.

This sequence belongs to the universal ribosomal protein uL2 family. In terms of assembly, part of the 50S ribosomal subunit. Forms a bridge to the 30S subunit in the 70S ribosome.

Functionally, one of the primary rRNA binding proteins. Required for association of the 30S and 50S subunits to form the 70S ribosome, for tRNA binding and peptide bond formation. It has been suggested to have peptidyltransferase activity; this is somewhat controversial. Makes several contacts with the 16S rRNA in the 70S ribosome. The sequence is that of Large ribosomal subunit protein uL2 from Brucella abortus (strain S19).